Reading from the N-terminus, the 226-residue chain is Gap junction beta-2 protein (226 aa).

The stretch at 2–13 (DWGALQTILGGV) is an intramembrane region. Residues 14 to 20 (NKYSTSI) are Cytoplasmic-facing. The chain crosses the membrane as a helical span at residues 21 to 40 (GKIWLTVLFIFRIMILVVAA). Topologically, residues 41–73 (KEVWGDEQADFVCNTLQPGCKNVCYDHYFPISH) are extracellular. Ca(2+) contacts are provided by Glu42, Gly45, and Glu47. 3 cysteine pairs are disulfide-bonded: Cys53–Cys180, Cys60–Cys174, and Cys64–Cys169. The helical transmembrane segment at 74 to 94 (IRLWALQLIFVSTPALLVAMH) threads the bilayer. At 95–135 (VAYRRHEKKRKFIKGEIKNEFKDIEEIKTQKVRIEGSLWWT) the chain is on the cytoplasmic side. The chain crosses the membrane as a helical span at residues 136–156 (YTSSIFFRVVFEAAFMYVFYV). Topologically, residues 157–189 (MYDGFSMQRLVKCNAWPCPNTVDCFVSRPTEKT) are extracellular. Residues 190 to 210 (VFTVFMIAVSGICILLNVTEL) form a helical membrane-spanning segment. The Cytoplasmic portion of the chain corresponds to 211–226 (CYLLIRYCSGKSKKPV).

Belongs to the connexin family. Beta-type (group I) subfamily. A hemichannel or connexon is composed of a hexamer of connexins. A functional gap junction is formed by the apposition of two hemichannels. Forms heteromeric channels with GJB4. Interacts with CNST.

The protein localises to the cell membrane. It is found in the cell junction. The protein resides in the gap junction. Functionally, structural component of gap junctions. Gap junctions are dodecameric channels that connect the cytoplasm of adjoining cells. They are formed by the docking of two hexameric hemichannels, one from each cell membrane. Small molecules and ions diffuse from one cell to a neighboring cell via the central pore. In Macaca mulatta (Rhesus macaque), this protein is Gap junction beta-2 protein (GJB2).